A 170-amino-acid chain; its full sequence is MKTMATRKRCKLSRTGPEFENVIKRLLCARTFHTRIGGDLTHGIINRGRRANAEQMGLQGSAQHFNIFPLDLWTQGKKTEVQKREGTDSIPAAGRSGTANQPSIAPHRCLFSRGITALDGLKRGRGCNGAAHLVRGDAWKTKLGEPWVSIALALAGPGAILILELSWFLG.

The helical transmembrane segment at 150-170 (IALALAGPGAILILELSWFLG) threads the bilayer.

As to expression, expressed at high levels in the pancreas and placenta. In terms of tissue distribution, expressed at high levels in the kidney.

The protein localises to the membrane. This chain is APRG1 tumor suppressor candidate, found in Homo sapiens (Human).